The sequence spans 466 residues: Glutamyl-tRNA reductase (466 aa).

Substrate is bound by residues Thr47–Arg50, Ser107, Glu112–Gln114, and Gln118. Catalysis depends on Cys48, which acts as the Nucleophile. Gly194–Ser199 lines the NADP(+) pocket.

This sequence belongs to the glutamyl-tRNA reductase family. As to quaternary structure, homodimer.

It carries out the reaction (S)-4-amino-5-oxopentanoate + tRNA(Glu) + NADP(+) = L-glutamyl-tRNA(Glu) + NADPH + H(+). It participates in porphyrin-containing compound metabolism; protoporphyrin-IX biosynthesis; 5-aminolevulinate from L-glutamyl-tRNA(Glu): step 1/2. Catalyzes the NADPH-dependent reduction of glutamyl-tRNA(Glu) to glutamate 1-semialdehyde (GSA). The sequence is that of Glutamyl-tRNA reductase from Corynebacterium efficiens (strain DSM 44549 / YS-314 / AJ 12310 / JCM 11189 / NBRC 100395).